The primary structure comprises 358 residues: Biotin synthase (358 aa).

The 260-residue stretch at 47–306 (KNNSKIKLCA…ALYKIIMPYA (260 aa)) folds into the Radical SAM core domain. 3 residues coordinate [4Fe-4S] cluster: Cys65, Cys69, and Cys72. Ser142, Cys174, Cys233, and Arg309 together coordinate [2Fe-2S] cluster.

It belongs to the radical SAM superfamily. Biotin synthase family. Homodimer. [4Fe-4S] cluster serves as cofactor. It depends on [2Fe-2S] cluster as a cofactor.

It catalyses the reaction (4R,5S)-dethiobiotin + (sulfur carrier)-SH + 2 reduced [2Fe-2S]-[ferredoxin] + 2 S-adenosyl-L-methionine = (sulfur carrier)-H + biotin + 2 5'-deoxyadenosine + 2 L-methionine + 2 oxidized [2Fe-2S]-[ferredoxin]. The protein operates within cofactor biosynthesis; biotin biosynthesis; biotin from 7,8-diaminononanoate: step 2/2. Its function is as follows. Catalyzes the conversion of dethiobiotin (DTB) to biotin by the insertion of a sulfur atom into dethiobiotin via a radical-based mechanism. The polypeptide is Biotin synthase (Methanocaldococcus jannaschii (strain ATCC 43067 / DSM 2661 / JAL-1 / JCM 10045 / NBRC 100440) (Methanococcus jannaschii)).